The sequence spans 202 residues: 3-isopropylmalate dehydratase small subunit 1 (202 aa).

It belongs to the LeuD family. LeuD type 1 subfamily. Heterodimer of LeuC and LeuD.

It catalyses the reaction (2R,3S)-3-isopropylmalate = (2S)-2-isopropylmalate. It participates in amino-acid biosynthesis; L-leucine biosynthesis; L-leucine from 3-methyl-2-oxobutanoate: step 2/4. Catalyzes the isomerization between 2-isopropylmalate and 3-isopropylmalate, via the formation of 2-isopropylmaleate. The polypeptide is 3-isopropylmalate dehydratase small subunit 1 (Bordetella pertussis (strain Tohama I / ATCC BAA-589 / NCTC 13251)).